The sequence spans 174 residues: UPF0340 protein MW2038 (174 aa).

The protein belongs to the UPF0340 family.

The protein is UPF0340 protein MW2038 of Staphylococcus aureus (strain MW2).